The primary structure comprises 323 residues: Lipid A biosynthesis myristoyltransferase (323 aa).

The chain crosses the membrane as a helical span at residues 23–43; the sequence is YWGAWLGVAAMAGIALTPPKF. An HXXXXD motif motif is present at residues 139–144; it reads HGWAVD.

The protein belongs to the LpxL/LpxM/LpxP family. LpxM subfamily.

It is found in the cell inner membrane. The catalysed reaction is alpha-Kdo-(2-&gt;4)-alpha-Kdo-(2-&gt;6)-(dodecanoyl)-lipid IVA (E. coli) + tetradecanoyl-[ACP] = alpha-Kdo-(2-&gt;4)-alpha-Kdo-(2-&gt;6)-lipid A (E. coli) + holo-[ACP]. The enzyme catalyses (9Z)-hexadecenoyl-(Kdo)2-lipid IVA (E. coli) + tetradecanoyl-[ACP] = ((9Z)-hexadecenoyl-tetradecanoyl)-(Kdo)2-lipid A + holo-[ACP]. Its pathway is glycolipid biosynthesis; KDO(2)-lipid A biosynthesis; KDO(2)-lipid A from CMP-3-deoxy-D-manno-octulosonate and lipid IV(A): step 4/4. The protein operates within bacterial outer membrane biogenesis; lipopolysaccharide biosynthesis. Its function is as follows. Catalyzes the transfer of myristate from myristoyl-[acyl-carrier-protein] (ACP) to Kdo(2)-(lauroyl)-lipid IV(A) to form Kdo(2)-lipid A. Can probably also catalyze the transfer of myristate to Kdo(2)-(palmitoleoyl)-lipid IV(A) to form the cold-adapted Kdo(2)-lipid A. In vitro, can acylate Kdo(2)-lipid IV(A), but acylation of (KDO)2-(lauroyl)-lipid IV(A) is about 100 times faster. In vitro, can use lauroyl-ACP but displays a slight kinetic preference for myristoyl-ACP. This Escherichia coli (strain K12) protein is Lipid A biosynthesis myristoyltransferase.